The chain runs to 478 residues: Phosphoglycerate kinase 2, chloroplastic (478 aa).

Residues 1–74 (MASTAATAAL…GKGARGVITM (74 aa)) constitute a chloroplast transit peptide. At Ser-78 the chain carries Phosphoserine. 11 residues coordinate (2R)-3-phosphoglycerate: Ala-96, Asp-97, Asn-99, Arg-113, Thr-135, His-136, Gly-138, Arg-139, Arg-194, His-226, and Arg-227. Gly-272 contributes to the ADP binding site. Gly-272 serves as a coordination point for CDP. Lys-274 and Lys-278 together coordinate AMP. Lys-278 is a binding site for ATP. Gly-296 contributes to the ADP binding site. Residue Gly-296 participates in CDP binding. AMP contacts are provided by Gly-297 and Gly-369. 2 residues coordinate ATP: Gly-297 and Gly-369. Gly-394 and Phe-399 together coordinate CDP. Phe-399 contributes to the ADP binding site. AMP is bound at residue Glu-400. Glu-400, Asp-431, and Ser-432 together coordinate ATP. A Mg(2+)-binding site is contributed by Asp-431.

It belongs to the phosphoglycerate kinase family. In terms of assembly, monomer. The cofactor is Mg(2+).

Its subcellular location is the plastid. It is found in the chloroplast. The enzyme catalyses (2R)-3-phosphoglycerate + ATP = (2R)-3-phospho-glyceroyl phosphate + ADP. Its pathway is carbohydrate biosynthesis; Calvin cycle. The protein is Phosphoglycerate kinase 2, chloroplastic of Arabidopsis thaliana (Mouse-ear cress).